Reading from the N-terminus, the 799-residue chain is Leucine--tRNA ligase (799 aa).

A 'HIGH' region motif is present at residues 39-50 (PYPSGAGLHMGH). The short motif at 575–579 (KMSKS) is the 'KMSKS' region element. Lys578 is an ATP binding site.

The protein belongs to the class-I aminoacyl-tRNA synthetase family.

It localises to the cytoplasm. It carries out the reaction tRNA(Leu) + L-leucine + ATP = L-leucyl-tRNA(Leu) + AMP + diphosphate. The chain is Leucine--tRNA ligase from Malacoplasma penetrans (strain HF-2) (Mycoplasma penetrans).